A 256-amino-acid chain; its full sequence is MSKRPADIVISTPASKVRRKLNFNSPFKSAAAVPTVRVTRRRTWVNRPMYRKPMMYRLFRSPDVPRGCEGPCKVQSYEQRHDVAHVGKVLCVSDVTRGTGITHRTGKRFCIKSIYVLGKIWMDDNIKTRNHTNTVMFFLVRDRRPYGTPKDFGQVFNMYDNEPSTATVKNDMRDGFQVIKKWSATVTGGQYASKEQAIINRFYKIYNHCTYNHQEAAKYENHTENALLLYMACTHASNPVYATLKIRIYFYDSIQN.

The Bipartite nuclear localization signal signature appears at 3–20; that stretch reads KRPADIVISTPASKVRRK. The Nuclear localization signal signature appears at 40–54; sequence RRRTWVNRPMYRKPM. A zinc finger spans residues 68-85; that stretch reads CEGPCKVQSYEQRHDVAH. Residues 101 to 122 carry the Nuclear export signal motif; sequence ITHRTGKRFCIKSIYVLGKIWM. A Bipartite nuclear localization signal motif is present at residues 200–247; sequence NRFYKIYNHCTYNHQEAAKYENHTENALLLYMACTHASNPVYATLKIR.

This sequence belongs to the geminiviridae capsid protein family. As to quaternary structure, homomultimer. Binds to single-stranded and double-stranded viral DNA. Interacts (via nuclear localization signals) with host importin alpha-1a.

The protein resides in the virion. The protein localises to the host nucleus. In terms of biological role, encapsidates the viral genome into characteristic twinned ('geminate') particles. Binds the genomic viral ssDNA and shuttles it into and out of the cell nucleus. Plays a role in protection of the genome from degradation, virus acquisition and transmission by insect vectors, infectivity, and systemic movement. The CP of monopartite geminiviruses is absolutely essential for virus movement. This is Capsid protein from Tomato leaf curl virus (strain Australia) (ToLCV).